Consider the following 415-residue polypeptide: UV excision repair protein RAD23 homolog B (415 aa).

The Ubiquitin-like domain occupies 1–79 (MQVTLKTLQQ…VVVMVTKPKA (79 aa)). The interval 80 to 175 (VTSAVPATTQ…STPGDSSRSN (96 aa)) is disordered. A compositionally biased stretch (low complexity) spans 84 to 143 (VPATTQQSSSPSTTTVSSSPAAAVAQAPAPTPALAPTSTPASTTPASTTASSEPAPTGAT). T155 carries the phosphothreonine modification. Residues S160 and S174 each carry the phosphoserine modification. At T186 the chain carries Phosphothreonine. Positions 188–228 (QSYENMVTEIMSMGYEREQVIAALRASFNNPDRAVEYLLMG) constitute a UBA 1 domain. S199 carries the phosphoserine modification. Y202 is subject to Phosphotyrosine. Residues 274–317 (HPLEFLRNQPQFQQMRQIIQQNPSLLPALLQQIGRENPQLLQQI) enclose the STI1 domain. Residues 334–355 (EAGGQGGGGGGGGGGGGGGGGI) form a disordered region. Residues 336-355 (GGQGGGGGGGGGGGGGGGGI) show a composition bias toward gly residues. A UBA 2 domain is found at 370-410 (PQEKEAIERLKALGFPEGLVIQAYFACEKNENLAANFLLQQ).

It belongs to the RAD23 family. In terms of assembly, component of the XPC complex composed of XPC, RAD23B and CETN2. Interacts with NGLY1 and PSMC1. Interacts with ATXN3. Interacts with AMFR. Interacts with VCP; the interaction is indirect and mediated by NGLY1.

It is found in the nucleus. It localises to the cytoplasm. Functionally, multiubiquitin chain receptor involved in modulation of proteasomal degradation. Binds to polyubiquitin chains. Proposed to be capable to bind simultaneously to the 26S proteasome and to polyubiquitinated substrates and to deliver ubiquitinated proteins to the proteasome. May play a role in endoplasmic reticulum-associated degradation (ERAD) of misfolded glycoproteins by association with PNGase and delivering deglycosylated proteins to the proteasome. Involved in global genome nucleotide excision repair (GG-NER) by acting as component of the XPC complex. Cooperatively with Cetn2 appears to stabilize Xpc. May protect Xpc from proteasomal degradation. In terms of biological role, the XPC complex is proposed to represent the first factor bound at the sites of DNA damage and together with other core recognition factors, Xpa, RPA and the TFIIH complex, is part of the pre-incision (or initial recognition) complex. The XPC complex recognizes a wide spectrum of damaged DNA characterized by distortions of the DNA helix such as single-stranded loops, mismatched bubbles or single-stranded overhangs. The orientation of XPC complex binding appears to be crucial for inducing a productive NER. XPC complex is proposed to recognize and to interact with unpaired bases on the undamaged DNA strand which is followed by recruitment of the TFIIH complex and subsequent scanning for lesions in the opposite strand in a 5'-to-3' direction by the NER machinery. Cyclobutane pyrimidine dimers (CPDs) which are formed upon UV-induced DNA damage esacpe detection by the XPC complex due to a low degree of structural perurbation. Instead they are detected by the UV-DDB complex which in turn recruits and cooperates with the XPC complex in the respective DNA repair. In vitro, the XPC:RAD23B dimer is sufficient to initiate NER; it preferentially binds to cisplatin and UV-damaged double-stranded DNA and also binds to a variety of chemically and structurally diverse DNA adducts. XPC:RAD23B contacts DNA both 5' and 3' of a cisplatin lesion with a preference for the 5' side. Xpc:Rad22b induces a bend in DNA upon binding. Xpc:Rad23b stimulates the activity of DNA glycosylases Tdg and Smug1. The sequence is that of UV excision repair protein RAD23 homolog B (Rad23b) from Rattus norvegicus (Rat).